Reading from the N-terminus, the 87-residue chain is DNA-directed RNA polymerase subunit omega (87 aa).

This sequence belongs to the RNA polymerase subunit omega family. As to quaternary structure, the RNAP catalytic core consists of 2 alpha, 1 beta, 1 beta' and 1 omega subunit. When a sigma factor is associated with the core the holoenzyme is formed, which can initiate transcription.

It carries out the reaction RNA(n) + a ribonucleoside 5'-triphosphate = RNA(n+1) + diphosphate. Its function is as follows. Promotes RNA polymerase assembly. Latches the N- and C-terminal regions of the beta' subunit thereby facilitating its interaction with the beta and alpha subunits. This chain is DNA-directed RNA polymerase subunit omega, found in Pseudomonas putida (strain W619).